Consider the following 1108-residue polypeptide: Transmembrane protein 132C (1108 aa).

Residues 1–27 form the signal peptide; sequence MRSEGAAPGPAAPLCGALSLLLGALLG. Residues 28 to 922 lie on the Extracellular side of the membrane; it reads KVIEGHGVTD…LVQTPRGLSD (895 aa). Residues Asn-316 and Asn-373 are each glycosylated (N-linked (GlcNAc...) asparagine). Residues 820–836 are compositionally biased toward basic and acidic residues; that stretch reads HASDRRQKGQHHERTGQ. Residues 820-857 form a disordered region; sequence HASDRRQKGQHHERTGQDGHLYGSSPVEREEGALRRAT. The helical transmembrane segment at 923–943 threads the bilayer; that stretch reads LEIGMYALLGVFCLAILVFLI. Residues 944–1108 lie on the Cytoplasmic side of the membrane; the sequence is NCATFALKYR…NYLEKLKDKA (165 aa). The segment at 1022–1072 is disordered; sequence QSQIHRSADSGGRQGREQKQDPLHSPTSKRKKVKFTTFTTIPPDDSCPTVN.

The protein belongs to the TMEM132 family.

It localises to the membrane. This chain is Transmembrane protein 132C (TMEM132C), found in Homo sapiens (Human).